The sequence spans 64 residues: Temporin-ALe (64 aa).

A signal peptide spans 1-22; sequence MFTLKKSLLLLFFLGTINLSLC. Residues 23-47 constitute a propeptide that is removed on maturation; the sequence is EQERNAEEERRDEPDERNAEVEKRF. Leucine 62 is subject to Leucine amide.

In terms of tissue distribution, expressed by the skin glands.

It is found in the secreted. In terms of biological role, antimicrobial peptide with activity against Gram-positive and Gram-negative bacteria and against fungi. Has been tested against S.aureus (MIC=1.25 ug/mL), B.pumilus (MIC=5.0 ug/mL), B.cereus (MIC=15.0 ug/mL), E.coli (MIC=1.25 ug/mL), B.dysenteriae (MIC=5.0 ug/mL), A.cacoaceticus (MIC=15.0 ug/mL), P.aeruginosa (MIC=5.0 ug/mL) and C.albicans (MIC=1.25 ug/mL). Also shows a weak hemolytic activity. The sequence is that of Temporin-ALe from Amolops loloensis (Lolokou Sucker Frog).